The primary structure comprises 173 residues: Co-chaperone protein HscB homolog (173 aa).

Residues Cys-5–Ile-77 form the J domain.

This sequence belongs to the HscB family. In terms of assembly, interacts with HscA and stimulates its ATPase activity.

Functionally, co-chaperone involved in the maturation of iron-sulfur cluster-containing proteins. Seems to help targeting proteins to be folded toward HscA. The polypeptide is Co-chaperone protein HscB homolog (Pseudomonas putida (strain GB-1)).